Here is a 196-residue protein sequence, read N- to C-terminus: Peptidyl-tRNA hydrolase (196 aa).

Position 18 (Y18) interacts with tRNA. The Proton acceptor role is filled by H23. Positions 69, 71, and 117 each coordinate tRNA.

This sequence belongs to the PTH family. In terms of assembly, monomer.

It localises to the cytoplasm. It carries out the reaction an N-acyl-L-alpha-aminoacyl-tRNA + H2O = an N-acyl-L-amino acid + a tRNA + H(+). In terms of biological role, hydrolyzes ribosome-free peptidyl-tRNAs (with 1 or more amino acids incorporated), which drop off the ribosome during protein synthesis, or as a result of ribosome stalling. Its function is as follows. Catalyzes the release of premature peptidyl moieties from peptidyl-tRNA molecules trapped in stalled 50S ribosomal subunits, and thus maintains levels of free tRNAs and 50S ribosomes. The sequence is that of Peptidyl-tRNA hydrolase from Aliivibrio salmonicida (strain LFI1238) (Vibrio salmonicida (strain LFI1238)).